Here is a 230-residue protein sequence, read N- to C-terminus: U2 small nuclear ribonucleoprotein A' (230 aa).

LRR repeat units lie at residues 15 to 36 (SLRN…NADT), 48 to 69 (GDRE…GVTE), 71 to 92 (HYTS…PRLE), 93 to 114 (TLRT…KNIA), and 115 to 136 (KLET…ESLK). Residues 149–187 (NPVQHVPRYRSYMISILPSLRMLDFQRVTQKERDEAEAM) form the LRRCT domain.

Belongs to the U2 small nuclear ribonucleoprotein A family. As to quaternary structure, associated with the spliceosome.

The protein localises to the nucleus. Involved in pre-mRNA splicing. The polypeptide is U2 small nuclear ribonucleoprotein A' (LEA1) (Yarrowia lipolytica (strain CLIB 122 / E 150) (Yeast)).